We begin with the raw amino-acid sequence, 724 residues long: Phosphoribosylformylglycinamidine synthase subunit PurL (724 aa).

Histidine 46 is a catalytic residue. 2 residues coordinate ATP: tyrosine 49 and lysine 88. Glutamate 90 is a Mg(2+) binding site. Residues 91–94 and arginine 113 contribute to the substrate site; that span reads SHNH. The active-site Proton acceptor is histidine 92. Aspartate 114 lines the Mg(2+) pocket. Glutamine 237 is a substrate binding site. Aspartate 265 contributes to the Mg(2+) binding site. 309–311 provides a ligand contact to substrate; it reads ESQ. Aspartate 489 and glycine 526 together coordinate ATP. Asparagine 527 contacts Mg(2+). Position 529 (serine 529) interacts with substrate.

It belongs to the FGAMS family. Monomer. Part of the FGAM synthase complex composed of 1 PurL, 1 PurQ and 2 PurS subunits.

The protein resides in the cytoplasm. It carries out the reaction N(2)-formyl-N(1)-(5-phospho-beta-D-ribosyl)glycinamide + L-glutamine + ATP + H2O = 2-formamido-N(1)-(5-O-phospho-beta-D-ribosyl)acetamidine + L-glutamate + ADP + phosphate + H(+). It functions in the pathway purine metabolism; IMP biosynthesis via de novo pathway; 5-amino-1-(5-phospho-D-ribosyl)imidazole from N(2)-formyl-N(1)-(5-phospho-D-ribosyl)glycinamide: step 1/2. In terms of biological role, part of the phosphoribosylformylglycinamidine synthase complex involved in the purines biosynthetic pathway. Catalyzes the ATP-dependent conversion of formylglycinamide ribonucleotide (FGAR) and glutamine to yield formylglycinamidine ribonucleotide (FGAM) and glutamate. The FGAM synthase complex is composed of three subunits. PurQ produces an ammonia molecule by converting glutamine to glutamate. PurL transfers the ammonia molecule to FGAR to form FGAM in an ATP-dependent manner. PurS interacts with PurQ and PurL and is thought to assist in the transfer of the ammonia molecule from PurQ to PurL. This is Phosphoribosylformylglycinamidine synthase subunit PurL from Granulibacter bethesdensis (strain ATCC BAA-1260 / CGDNIH1).